The sequence spans 132 residues: MDEEVVGQIGQGLMVLVGITHDDTEDDAAYLADKVVNLRIFDDSEGKMNLSLVDIGGEILSVSQFTLYGDTKKGRRPNYMNAAKPDKALGLYEKWNDLLREKGIKVETGTFGAMMDVQLTNSGPVTLIMDSK.

The protein belongs to the DTD family.

Its function is as follows. A non-functional D-aminoacyl-tRNA deacylase. The polypeptide is Inactive D-aminoacyl-tRNA deacylase (Bacillus subtilis (strain 168)).